A 415-amino-acid chain; its full sequence is Probable disease resistance protein At5g66890 (415 aa).

Residues 8 to 43 form the NB-ARC domain; sequence SFDALPHNLRECFLDMASFLEDQRIIASTIIDLWSA. 6 LRR repeats span residues 229-251, 256-278, 280-303, 304-326, 328-351, and 352-373; these read SLEK…EDVS, SLQE…ISQV, SLKK…GDLR, DLET…IDRL, NLRF…GKLK, and KLEK…VKNL. The stretch at 239–260 forms a coiled coil; sequence HVVDALNELEDVSETLQSLQEI.

This sequence belongs to the disease resistance NB-LRR family.

Functionally, possible disease resistance protein. This is Probable disease resistance protein At5g66890 from Arabidopsis thaliana (Mouse-ear cress).